The following is a 194-amino-acid chain: Orotate phosphoribosyltransferase (194 aa).

Position 117 to 125 (117 to 125 (EDIVTTGLS)) interacts with 5-phospho-alpha-D-ribose 1-diphosphate. Orotate-binding residues include T121 and R149.

The protein belongs to the purine/pyrimidine phosphoribosyltransferase family. PyrE subfamily. As to quaternary structure, homodimer. Mg(2+) is required as a cofactor.

The enzyme catalyses orotidine 5'-phosphate + diphosphate = orotate + 5-phospho-alpha-D-ribose 1-diphosphate. It functions in the pathway pyrimidine metabolism; UMP biosynthesis via de novo pathway; UMP from orotate: step 1/2. Functionally, catalyzes the transfer of a ribosyl phosphate group from 5-phosphoribose 1-diphosphate to orotate, leading to the formation of orotidine monophosphate (OMP). The polypeptide is Orotate phosphoribosyltransferase (Parvibaculum lavamentivorans (strain DS-1 / DSM 13023 / NCIMB 13966)).